A 237-amino-acid chain; its full sequence is Cysteine-rich venom protein tigrin (237 aa).

Positions 1 to 18 are cleaved as a signal peptide; the sequence is MIVFILLSLAAVLRQSFG. The SCP domain occupies 37-165; that stretch reads VNIHNSFRRS…LYNYFYVCQY (129 aa). 8 disulfide bridges follow: Cys-74–Cys-152, Cys-91–Cys-166, Cys-147–Cys-163, Cys-185–Cys-192, Cys-188–Cys-197, Cys-201–Cys-232, Cys-210–Cys-226, and Cys-217–Cys-230. Positions 201–232 constitute a ShKT domain; that stretch reads CTHKDDYNNCNSLVSDCQSDWDKSHCPATCFC.

This sequence belongs to the CRISP family. In terms of tissue distribution, expressed by the venom gland.

The protein localises to the secreted. This protein does not inhibit smooth muscle contraction elicited by high potassium levels or caffeine. This is Cysteine-rich venom protein tigrin from Rhabdophis tigrinus tigrinus (Tiger keelback snake).